The primary structure comprises 371 residues: L-lysine 4-hydroxylase (371 aa).

Residues histidine 174, glutamate 176, and histidine 310 each coordinate Fe cation.

The protein belongs to the clavaminate synthase family. Fe(2+) is required as a cofactor.

It catalyses the reaction L-lysine + 2-oxoglutarate + O2 = (4R)-4-hydroxy-L-lysine + succinate + CO2. Functionally, alpha-ketoglutarate-dependent dioxygenase that in vitro catalyzes the regio- and stereoselective hydroxylation of L-lysine, leading to (4R)-4-hydroxy-L-lysine. This Niastella koreensis (strain DSM 17620 / KACC 11465 / NBRC 106392 / GR20-10) protein is L-lysine 4-hydroxylase.